Consider the following 259-residue polypeptide: 3-deoxy-manno-octulosonate cytidylyltransferase (259 aa).

Belongs to the KdsB family.

It localises to the cytoplasm. The enzyme catalyses 3-deoxy-alpha-D-manno-oct-2-ulosonate + CTP = CMP-3-deoxy-beta-D-manno-octulosonate + diphosphate. It functions in the pathway nucleotide-sugar biosynthesis; CMP-3-deoxy-D-manno-octulosonate biosynthesis; CMP-3-deoxy-D-manno-octulosonate from 3-deoxy-D-manno-octulosonate and CTP: step 1/1. Its pathway is bacterial outer membrane biogenesis; lipopolysaccharide biosynthesis. Activates KDO (a required 8-carbon sugar) for incorporation into bacterial lipopolysaccharide in Gram-negative bacteria. In Protochlamydia amoebophila (strain UWE25), this protein is 3-deoxy-manno-octulosonate cytidylyltransferase.